Consider the following 116-residue polypeptide: Protein AV2 (116 aa).

Belongs to the geminiviridae protein AV2/V2 family. As to quaternary structure, interacts with host SGS3.

It is found in the host cytoplasm. The protein resides in the host perinuclear region. In terms of biological role, through its interaction with host SGS3, acts as a suppressor of RNA-mediated gene silencing, also known as post-transcriptional gene silencing (PTGS), a mechanism of plant viral defense that limits the accumulation of viral RNAs. This is Protein AV2 from Mungbean yellow mosaic virus (strain Vigna) (MYMV).